Consider the following 852-residue polypeptide: Chitin synthase 1 (852 aa).

Disordered regions lie at residues 27–46 (EDQDDMLPSTSAAAGETNYA) and 53–97 (SSLR…QANG). Over residues 53–74 (SSLRSQKSANKPTTAQNRNSAA) the composition is skewed to polar residues. Transmembrane regions (helical) follow at residues 492 to 509 (RWLNGSFFAGVYGLIHFR), 532 to 552 (VISLVFSWFSVGNFYIAFYFI), 572 to 592 (IFDFCKYAYAFLLFVIFICSM), 601 to 621 (FLFMACLVGFAIIMCYMLFCS), 686 to 706 (FLPYLLLLPGYINILNIYAFC), 787 to 807 (THLVLAWIACNALLVVFITTS), and 830 to 850 (CGLGIFRFLGSIMFLLLGIFT).

Belongs to the chitin synthase family. Class II subfamily.

The protein resides in the cell membrane. The enzyme catalyses [(1-&gt;4)-N-acetyl-beta-D-glucosaminyl](n) + UDP-N-acetyl-alpha-D-glucosamine = [(1-&gt;4)-N-acetyl-beta-D-glucosaminyl](n+1) + UDP + H(+). In terms of biological role, polymerizes chitin, a structural polymer of the cell wall and septum, by transferring the sugar moiety of UDP-GlcNAc to the non-reducing end of the growing chitin polymer. This Mucor circinelloides f. lusitanicus (Mucor racemosus var. lusitanicus) protein is Chitin synthase 1 (CHS1).